The sequence spans 750 residues: Photosystem I P700 chlorophyll a apoprotein A1 (750 aa).

Transmembrane regions (helical) follow at residues 70–93, 156–179, 195–219, 291–309, 346–369, 385–411, 433–455, and 531–549; these read VFSA…FHGA, LYCT…FHYH, LNHH…HVSL, IAHH…GHMY, WHAQ…HHMY, LSLF…IFMV, AIIS…LYIH, and FLVH…LILL. [4Fe-4S] cluster contacts are provided by cysteine 573 and cysteine 582. 2 helical membrane passes run 589–610 and 664–686; these read HVFL…HFSW and LSAY…MFLF. Residue histidine 675 coordinates chlorophyll a'. Chlorophyll a-binding residues include methionine 683 and tyrosine 691. Tryptophan 692 is a phylloquinone binding site. Residues 724–744 traverse the membrane as a helical segment; the sequence is AVGVTHYLLGGIATTWAFFLA.

It belongs to the PsaA/PsaB family. The PsaA/B heterodimer binds the P700 chlorophyll special pair and subsequent electron acceptors. PSI consists of a core antenna complex that captures photons, and an electron transfer chain that converts photonic excitation into a charge separation. The eukaryotic PSI reaction center is composed of at least 11 subunits. The cofactor is P700 is a chlorophyll a/chlorophyll a' dimer, A0 is one or more chlorophyll a, A1 is one or both phylloquinones and FX is a shared 4Fe-4S iron-sulfur center..

Its subcellular location is the plastid. The protein resides in the chloroplast thylakoid membrane. The catalysed reaction is reduced [plastocyanin] + hnu + oxidized [2Fe-2S]-[ferredoxin] = oxidized [plastocyanin] + reduced [2Fe-2S]-[ferredoxin]. Its function is as follows. PsaA and PsaB bind P700, the primary electron donor of photosystem I (PSI), as well as the electron acceptors A0, A1 and FX. PSI is a plastocyanin-ferredoxin oxidoreductase, converting photonic excitation into a charge separation, which transfers an electron from the donor P700 chlorophyll pair to the spectroscopically characterized acceptors A0, A1, FX, FA and FB in turn. Oxidized P700 is reduced on the lumenal side of the thylakoid membrane by plastocyanin. The protein is Photosystem I P700 chlorophyll a apoprotein A1 of Crucihimalaya wallichii (Rock-cress).